The chain runs to 177 residues: Adenine phosphoribosyltransferase (177 aa).

Belongs to the purine/pyrimidine phosphoribosyltransferase family. As to quaternary structure, homodimer.

It is found in the cytoplasm. The catalysed reaction is AMP + diphosphate = 5-phospho-alpha-D-ribose 1-diphosphate + adenine. The protein operates within purine metabolism; AMP biosynthesis via salvage pathway; AMP from adenine: step 1/1. Its function is as follows. Catalyzes a salvage reaction resulting in the formation of AMP, that is energically less costly than de novo synthesis. The protein is Adenine phosphoribosyltransferase of Rhodococcus opacus (strain B4).